Here is a 301-residue protein sequence, read N- to C-terminus: Cytosolic sulfotransferase 3 (301 aa).

Residue K53 to W58 coordinates 3'-phosphoadenylyl sulfate. The active-site Proton acceptor is H115. 3'-phosphoadenylyl sulfate contacts are provided by residues R137, S145, Y201, V235 to M240, and R263 to G265.

The protein belongs to the sulfotransferase 1 family.

Its subcellular location is the cytoplasm. Its activity is regulated as follows. Inhibited by Hg(2+), Co(2+), Zn(2+), Cd(2+), Cu(2+) and Pb(2+) ions. Activated slightly by Mn(2+), Ca(2+) and Mg(2+) ions. Functionally, sulfotransferase that utilizes 3'-phospho-5'-adenylyl sulfate (PAPS) as sulfonate donor to catalyze the sulfate conjugation of a variety of xenobiotic and endogenous compounds, including dopamine, T3 (triiodo-L-thyronine), T4 (thyroxine), estrone, DHEA (dehydroepiandrosterone), flavonoids, isoflavonoids and other phenolic compounds. The sequence is that of Cytosolic sulfotransferase 3 from Danio rerio (Zebrafish).